The chain runs to 318 residues: Beta-sarcoglycan (318 aa).

The tract at residues 1–32 is disordered; the sequence is MAAAAAAAAEQQSSNGPVKKSMREKAVERRNV. The Cytoplasmic portion of the chain corresponds to 1-65; sequence MAAAAAAAAE…GLRGRKGNLA (65 aa). Positions 21–32 are enriched in basic and acidic residues; sequence SMREKAVERRNV. Residues 66–86 traverse the membrane as a helical; Signal-anchor for type II membrane protein segment; it reads ICVIVLLFLLAVINLIITLVI. The Extracellular segment spans residues 87 to 318; it reads WAVIRIGPNG…VSDNPCGNTH (232 aa). 3 N-linked (GlcNAc...) asparagine glycosylation sites follow: N158, N211, and N258. Intrachain disulfides connect C288–C314 and C290–C307.

Belongs to the sarcoglycan beta/delta/gamma/zeta family. As to quaternary structure, cross-link to form 2 major subcomplexes: one consisting of SGCB, SGCD and SGCG and the other consisting of SGCB and SGCD. The association between SGCB and SGCG is particularly strong while SGCA is loosely associated with the other sarcoglycans. Post-translationally, disulfide bonds are present.

The protein resides in the cell membrane. It is found in the sarcolemma. Its subcellular location is the cytoplasm. The protein localises to the cytoskeleton. Component of the sarcoglycan complex, a subcomplex of the dystrophin-glycoprotein complex which forms a link between the F-actin cytoskeleton and the extracellular matrix. The protein is Beta-sarcoglycan (SGCB) of Oryctolagus cuniculus (Rabbit).